Here is a 513-residue protein sequence, read N- to C-terminus: Histidine ammonia-lyase (513 aa).

A cross-link (5-imidazolinone (Ala-Gly)) is located at residues 144-146 (ASG). Serine 145 is subject to 2,3-didehydroalanine (Ser).

It belongs to the PAL/histidase family. In terms of processing, contains an active site 4-methylidene-imidazol-5-one (MIO), which is formed autocatalytically by cyclization and dehydration of residues Ala-Ser-Gly.

The protein localises to the cytoplasm. It catalyses the reaction L-histidine = trans-urocanate + NH4(+). It participates in amino-acid degradation; L-histidine degradation into L-glutamate; N-formimidoyl-L-glutamate from L-histidine: step 1/3. The protein is Histidine ammonia-lyase of Streptococcus pyogenes serotype M3 (strain ATCC BAA-595 / MGAS315).